The primary structure comprises 67 residues: DNA gyrase inhibitor YacG (67 aa).

Residues Cys10, Cys13, Cys29, and Cys33 each contribute to the Zn(2+) site. Positions 44–57 are enriched in basic and acidic residues; that stretch reads EEKRIPSSGDRSDT. The interval 44–67 is disordered; the sequence is EEKRIPSSGDRSDTDGWSEEENQP.

It belongs to the DNA gyrase inhibitor YacG family. Interacts with GyrB. The cofactor is Zn(2+).

Functionally, inhibits all the catalytic activities of DNA gyrase by preventing its interaction with DNA. Acts by binding directly to the C-terminal domain of GyrB, which probably disrupts DNA binding by the gyrase. This chain is DNA gyrase inhibitor YacG, found in Cronobacter sakazakii (strain ATCC BAA-894) (Enterobacter sakazakii).